Reading from the N-terminus, the 123-residue chain is Ribulose bisphosphate carboxylase small subunit, chloroplastic 1 (123 aa).

M1 carries the post-translational modification Methionine derivative.

The protein belongs to the RuBisCO small chain family. Heterohexadecamer of 8 large and 8 small subunits.

It localises to the plastid. Its subcellular location is the chloroplast. RuBisCO catalyzes two reactions: the carboxylation of D-ribulose 1,5-bisphosphate, the primary event in carbon dioxide fixation, as well as the oxidative fragmentation of the pentose substrate. Both reactions occur simultaneously and in competition at the same active site. Although the small subunit is not catalytic it is essential for maximal activity. This chain is Ribulose bisphosphate carboxylase small subunit, chloroplastic 1, found in Spinacia oleracea (Spinach).